Reading from the N-terminus, the 316-residue chain is ATP synthase gamma chain (316 aa).

The protein belongs to the ATPase gamma chain family. In terms of assembly, F-type ATPases have 2 components, CF(1) - the catalytic core - and CF(0) - the membrane proton channel. CF(1) has five subunits: alpha(3), beta(3), gamma(1), delta(1), epsilon(1). CF(0) has three main subunits: a, b and c.

It localises to the cellular thylakoid membrane. Functionally, produces ATP from ADP in the presence of a proton gradient across the membrane. The gamma chain is believed to be important in regulating ATPase activity and the flow of protons through the CF(0) complex. This is ATP synthase gamma chain from Prochlorococcus marinus (strain MIT 9303).